The chain runs to 329 residues: MRCSLRGCVQGRGGKSGVSLSKFSPKKMSFFFIFMVIFCIQSLVALLQNGFLATVLGREWVRSQGLPAGDMIVACLAASRFCLHGVAIVNNFLTFVKLWSQKIYFSVLWDFVNTVNFWCTTWLAIFYCVKISSFSHPIFFWIKWRISRSVPRLLLGSLVIGGLSAVSSATGNTIAFQMTACENYTLAYRTRAFYAYYFRCHAMLMWIIPFFLFLLSVILLMFSLYRHLEHMRYRRPWSHDYSTQAHTMALKSLAFFLVFYTSYVLFLVISVTRVVNVHSSWHWAWEVITYMGILLHSTILTLSNPKMRKALKIKFPDLCVARSQDKRRG.

The Extracellular portion of the chain corresponds to 1–27 (MRCSLRGCVQGRGGKSGVSLSKFSPKK). Residues 28-48 (MSFFFIFMVIFCIQSLVALLQ) form a helical membrane-spanning segment. Residues 49–68 (NGFLATVLGREWVRSQGLPA) lie on the Cytoplasmic side of the membrane. The chain crosses the membrane as a helical span at residues 69–89 (GDMIVACLAASRFCLHGVAIV). The Extracellular portion of the chain corresponds to 90–121 (NNFLTFVKLWSQKIYFSVLWDFVNTVNFWCTT). Residues 122-142 (WLAIFYCVKISSFSHPIFFWI) form a helical membrane-spanning segment. Over 143–153 (KWRISRSVPRL) the chain is Cytoplasmic. The chain crosses the membrane as a helical span at residues 154–174 (LLGSLVIGGLSAVSSATGNTI). Residues 175–201 (AFQMTACENYTLAYRTRAFYAYYFRCH) are Extracellular-facing. Asn183 is a glycosylation site (N-linked (GlcNAc...) asparagine). A helical transmembrane segment spans residues 202-222 (AMLMWIIPFFLFLLSVILLMF). The Cytoplasmic segment spans residues 223 to 251 (SLYRHLEHMRYRRPWSHDYSTQAHTMALK). A helical transmembrane segment spans residues 252–272 (SLAFFLVFYTSYVLFLVISVT). The Extracellular portion of the chain corresponds to 273–282 (RVVNVHSSWH). A helical membrane pass occupies residues 283–303 (WAWEVITYMGILLHSTILTLS). The Cytoplasmic segment spans residues 304 to 329 (NPKMRKALKIKFPDLCVARSQDKRRG).

This sequence belongs to the G-protein coupled receptor T2R family. Expressed in tongue and gastrointestinal tract.

The protein resides in the membrane. In terms of biological role, putative taste receptor which may play a role in the perception of bitterness. The polypeptide is Taste receptor type 2 member 134 (Rattus norvegicus (Rat)).